The sequence spans 486 residues: V-type proton ATPase subunit B1 (486 aa).

The residue at position 2 (Gly2) is an N-acetylglycine.

It belongs to the ATPase alpha/beta chains family. V-ATPase is a heteromultimeric enzyme composed of a peripheral catalytic V1 complex (components A to H) attached to an integral membrane V0 proton pore complex (components: a, c, c'', d and e).

The protein resides in the vacuole membrane. Functionally, non-catalytic subunit of the peripheral V1 complex of vacuolar ATPase. V-ATPase is responsible for acidifying a variety of intracellular compartments in eukaryotic cells. The polypeptide is V-type proton ATPase subunit B1 (VHA-B1) (Arabidopsis thaliana (Mouse-ear cress)).